A 215-amino-acid polypeptide reads, in one-letter code: Pyrrolidone-carboxylate peptidase (215 aa).

Catalysis depends on residues Glu-80, Cys-143, and His-167.

It belongs to the peptidase C15 family. In terms of assembly, homotetramer.

The protein localises to the cytoplasm. The catalysed reaction is Release of an N-terminal pyroglutamyl group from a polypeptide, the second amino acid generally not being Pro.. In terms of biological role, removes 5-oxoproline from various penultimate amino acid residues except L-proline. This chain is Pyrrolidone-carboxylate peptidase, found in Bacillus cereus (strain B4264).